We begin with the raw amino-acid sequence, 272 residues long: NADPH-dependent 7-cyano-7-deazaguanine reductase (272 aa).

Position 82-84 (82-84) interacts with substrate; sequence IES. Residue 84-85 coordinates NADPH; it reads SK. Cys178 functions as the Thioimide intermediate in the catalytic mechanism. Asp185 functions as the Proton donor in the catalytic mechanism. Residue 217–218 participates in substrate binding; it reads HE. 246-247 contacts NADPH; the sequence is RG.

This sequence belongs to the GTP cyclohydrolase I family. QueF type 2 subfamily. As to quaternary structure, homodimer.

It localises to the cytoplasm. The catalysed reaction is 7-aminomethyl-7-carbaguanine + 2 NADP(+) = 7-cyano-7-deazaguanine + 2 NADPH + 3 H(+). Its pathway is tRNA modification; tRNA-queuosine biosynthesis. Catalyzes the NADPH-dependent reduction of 7-cyano-7-deazaguanine (preQ0) to 7-aminomethyl-7-deazaguanine (preQ1). This Stenotrophomonas maltophilia (strain K279a) protein is NADPH-dependent 7-cyano-7-deazaguanine reductase.